A 313-amino-acid chain; its full sequence is Zinc transporter ZitB (313 aa).

At methionine 1–arginine 20 the chain is on the cytoplasmic side. Residues leucine 21–leucine 41 traverse the membrane as a helical segment. Residues serine 42–leucine 47 lie on the Periplasmic side of the membrane. The helical transmembrane segment at leucine 48 to valine 68 threads the bilayer. The Cytoplasmic segment spans residues glutamine 69 to leucine 89. The chain crosses the membrane as a helical span at residues alanine 90–isoleucine 110. The Periplasmic segment spans residues glutamate 111 to glycine 121. Residues glycine 122–leucine 142 traverse the membrane as a helical segment. Topologically, residues histidine 143–histidine 159 are cytoplasmic. The helical transmembrane segment at valine 160–threonine 180 threads the bilayer. Glycine 181 is a topological domain (periplasmic). A helical transmembrane segment spans residues tryptophan 182 to tryptophan 202. At arginine 203–histidine 313 the chain is on the cytoplasmic side.

The protein belongs to the cation diffusion facilitator (CDF) transporter (TC 2.A.4) family. SLC30A subfamily.

The protein localises to the cell inner membrane. Its function is as follows. Involved in zinc efflux across the cytoplasmic membrane, thus reducing zinc accumulation in the cytoplasm and rendering bacteria more resistant to zinc. It may contribute to zinc homeostasis at low concentrations of zinc. This is Zinc transporter ZitB (zitB) from Shigella flexneri.